A 221-amino-acid polypeptide reads, in one-letter code: Germin-like protein subfamily 1 member 17 (221 aa).

Residues 1–21 form the signal peptide; sequence MKVSMSLILITLSALVTIAKA. Cys31 and Cys48 are joined by a disulfide. In terms of domain architecture, Cupin type-1 spans 76–213; the sequence is SNVTTVNVDQ…AFQLDVNVVK (138 aa). N-linked (GlcNAc...) asparagine glycosylation is present at Asn77. Mn(2+) contacts are provided by His110, His112, Glu117, and His159.

Belongs to the germin family. Oligomer (believed to be a pentamer but probably hexamer).

It localises to the secreted. The protein resides in the extracellular space. The protein localises to the apoplast. Its function is as follows. May play a role in plant defense. Probably has no oxalate oxidase activity even if the active site is conserved. The chain is Germin-like protein subfamily 1 member 17 from Arabidopsis thaliana (Mouse-ear cress).